We begin with the raw amino-acid sequence, 95 residues long: Aspartyl/glutamyl-tRNA(Asn/Gln) amidotransferase subunit C (95 aa).

It belongs to the GatC family. Heterotrimer of A, B and C subunits.

It catalyses the reaction L-glutamyl-tRNA(Gln) + L-glutamine + ATP + H2O = L-glutaminyl-tRNA(Gln) + L-glutamate + ADP + phosphate + H(+). The enzyme catalyses L-aspartyl-tRNA(Asn) + L-glutamine + ATP + H2O = L-asparaginyl-tRNA(Asn) + L-glutamate + ADP + phosphate + 2 H(+). Allows the formation of correctly charged Asn-tRNA(Asn) or Gln-tRNA(Gln) through the transamidation of misacylated Asp-tRNA(Asn) or Glu-tRNA(Gln) in organisms which lack either or both of asparaginyl-tRNA or glutaminyl-tRNA synthetases. The reaction takes place in the presence of glutamine and ATP through an activated phospho-Asp-tRNA(Asn) or phospho-Glu-tRNA(Gln). This chain is Aspartyl/glutamyl-tRNA(Asn/Gln) amidotransferase subunit C, found in Jannaschia sp. (strain CCS1).